The chain runs to 169 residues: S-ribosylhomocysteine lyase (169 aa).

Positions 54, 58, and 128 each coordinate Fe cation.

This sequence belongs to the LuxS family. As to quaternary structure, homodimer. It depends on Fe cation as a cofactor.

It carries out the reaction S-(5-deoxy-D-ribos-5-yl)-L-homocysteine = (S)-4,5-dihydroxypentane-2,3-dione + L-homocysteine. Involved in the synthesis of autoinducer 2 (AI-2) which is secreted by bacteria and is used to communicate both the cell density and the metabolic potential of the environment. The regulation of gene expression in response to changes in cell density is called quorum sensing. Catalyzes the transformation of S-ribosylhomocysteine (RHC) to homocysteine (HC) and 4,5-dihydroxy-2,3-pentadione (DPD). The polypeptide is S-ribosylhomocysteine lyase (Shewanella woodyi (strain ATCC 51908 / MS32)).